The sequence spans 715 residues: MSSSKALIKTLIKNPTRIKSKSQAKQLHAQFIRTQSLSHTSASIVISIYTNLKLLHEALLLFKTLKSPPVLAWKSVIRCFTDQSLFSKALASFVEMRASGRCPDHNVFPSVLKSCTMMMDLRFGESVHGFIVRLGMDCDLYTGNALMNMYAKLLGMGSKISVGNVFDEMPQRTSNSGDEDVKAETCIMPFGIDSVRRVFEVMPRKDVVSYNTIIAGYAQSGMYEDALRMVREMGTTDLKPDSFTLSSVLPIFSEYVDVIKGKEIHGYVIRKGIDSDVYIGSSLVDMYAKSARIEDSERVFSRLYCRDGISWNSLVAGYVQNGRYNEALRLFRQMVTAKVKPGAVAFSSVIPACAHLATLHLGKQLHGYVLRGGFGSNIFIASALVDMYSKCGNIKAARKIFDRMNVLDEVSWTAIIMGHALHGHGHEAVSLFEEMKRQGVKPNQVAFVAVLTACSHVGLVDEAWGYFNSMTKVYGLNQELEHYAAVADLLGRAGKLEEAYNFISKMCVEPTGSVWSTLLSSCSVHKNLELAEKVAEKIFTVDSENMGAYVLMCNMYASNGRWKEMAKLRLRMRKKGLRKKPACSWIEMKNKTHGFVSGDRSHPSMDKINEFLKAVMEQMEKEGYVADTSGVLHDVDEEHKRELLFGHSERLAVAFGIINTEPGTTIRVTKNIRICTDCHVAIKFISKITEREIIVRDNSRFHHFNRGNCSCGDYW.

PPR repeat units follow at residues 38-68 (SHTSASIVISIYTNLKLLHEALLLFKTLKSP), 69-103 (PVLAWKSVIRCFTDQSLFSKALASFVEMRASGRCP), 104-138 (DHNVFPSVLKSCTMMMDLRFGESVHGFIVRLGMDC), 139-172 (DLYTGNALMNMYAKLLGMGSKISVGNVFDEMPQR), 206-240 (DVVSYNTIIAGYAQSGMYEDALRMVREMGTTDLKP), 241-275 (DSFTLSSVLPIFSEYVDVIKGKEIHGYVIRKGIDS), 276-306 (DVYIGSSLVDMYAKSARIEDSERVFSRLYCR), 307-341 (DGISWNSLVAGYVQNGRYNEALRLFRQMVTAKVKP), 342-376 (GAVAFSSVIPACAHLATLHLGKQLHGYVLRGGFGS), 377-407 (NIFIASALVDMYSKCGNIKAARKIFDRMNVL), 408-442 (DEVSWTAIIMGHALHGHGHEAVSLFEEMKRQGVKP), 443-473 (NQVAFVAVLTACSHVGLVDEAWGYFNSMTKV), and 479-509 (ELEHYAAVADLLGRAGKLEEAYNFISKMCVE). The tract at residues 514–589 (VWSTLLSSCS…KPACSWIEMK (76 aa)) is type E motif. The type E(+) motif stretch occupies residues 590-620 (NKTHGFVSGDRSHPSMDKINEFLKAVMEQME). The interval 621-715 (KEGYVADTSG…RGNCSCGDYW (95 aa)) is type DYW motif.

The protein belongs to the PPR family. PCMP-H subfamily.

The protein is Putative pentatricopeptide repeat-containing protein At3g23330 (PCMP-H32) of Arabidopsis thaliana (Mouse-ear cress).